The chain runs to 165 residues: Lipoprotein signal peptidase (165 aa).

3 helical membrane-spanning segments follow: residues 9–29 (SFLWLSAVTFLLDLSSKYFVV), 65–85 (WQKYFFIVLAIAISLMLCYFL), and 100–120 (ALIIGGALGNMIDRLYHGFVV). Residues D121 and D139 contribute to the active site. The chain crosses the membrane as a helical span at residues 134–154 (VFNVADIAISLGAGLMILDAF).

Belongs to the peptidase A8 family.

The protein resides in the cell inner membrane. The enzyme catalyses Release of signal peptides from bacterial membrane prolipoproteins. Hydrolyzes -Xaa-Yaa-Zaa-|-(S,diacylglyceryl)Cys-, in which Xaa is hydrophobic (preferably Leu), and Yaa (Ala or Ser) and Zaa (Gly or Ala) have small, neutral side chains.. Its pathway is protein modification; lipoprotein biosynthesis (signal peptide cleavage). In terms of biological role, this protein specifically catalyzes the removal of signal peptides from prolipoproteins. The chain is Lipoprotein signal peptidase from Pasteurella multocida (strain Pm70).